Here is a 1323-residue protein sequence, read N- to C-terminus: Sister chromatid cohesion protein PDS5 homolog A-B (1323 aa).

Residues 385 to 421 (FLVNDQLLGFVRERTLDKRWRVRKEAMMGLAQLYKKY) form an HEAT repeat. The tract at residues 1138–1323 (PLNATGRRPY…TAQRQIDLHR (186 aa)) is disordered. The span at 1153–1165 (SEISNNVSINSES) shows a compositional bias: low complexity. Polar residues-rich tracts occupy residues 1166–1176 (DASVANRQSSE) and 1210–1220 (LDQTAPSNTGT). A compositionally biased stretch (basic and acidic residues) spans 1235-1246 (NIRKESEEKKVD).

As to quaternary structure, interacts with the cohesin complex. Binds chromatin in a cohesin-dependent manner.

The protein localises to the nucleus. May regulate sister chromatid cohesion during mitosis and couple it to DNA replication. The protein is Sister chromatid cohesion protein PDS5 homolog A-B (pds5a-b) of Xenopus laevis (African clawed frog).